Reading from the N-terminus, the 371-residue chain is Cytochrome b (371 aa).

8 consecutive transmembrane segments (helical) span residues 25 to 45, 69 to 90, 105 to 125, 170 to 190, 218 to 238, 280 to 300, 312 to 332, and 339 to 358; these read FGSM…FLAV, WMMQ…YIHI, WLSG…GXXX, XXXX…XXXX, YKDL…VSFL, LGGA…PFTH, IMQL…WAAT, and FTMI…IMNP. Heme b contacts are provided by His75 and His89. Heme b contacts are provided by Xaa174 and Xaa188.

Belongs to the cytochrome b family. As to quaternary structure, the cytochrome bc1 complex contains 3 respiratory subunits (MT-CYB, CYC1 and UQCRFS1), 2 core proteins (UQCRC1 and UQCRC2) and probably 6 low-molecular weight proteins. Heme b serves as cofactor.

It localises to the mitochondrion inner membrane. In terms of biological role, component of the ubiquinol-cytochrome c reductase complex (complex III or cytochrome b-c1 complex) that is part of the mitochondrial respiratory chain. The b-c1 complex mediates electron transfer from ubiquinol to cytochrome c. Contributes to the generation of a proton gradient across the mitochondrial membrane that is then used for ATP synthesis. The chain is Cytochrome b (MT-CYB) from Eryx tataricus (Tartar sand boa).